The sequence spans 218 residues: Protein N-lysine methyltransferase METTL21A (218 aa).

Residues Trp47, 73–75, Asp94, Trp125, and Ala143 contribute to the S-adenosyl-L-methionine site; that span reads GAG.

It belongs to the methyltransferase superfamily. METTL21 family. Interacts with heat shock 70 family members; at least some of these proteins are methylation substrates.

Its subcellular location is the cytoplasm. It carries out the reaction L-lysyl-[protein] + 3 S-adenosyl-L-methionine = N(6),N(6),N(6)-trimethyl-L-lysyl-[protein] + 3 S-adenosyl-L-homocysteine + 3 H(+). Its function is as follows. Protein-lysine methyltransferase that selectively trimethylates residues in heat shock protein 70 (HSP70) family members. Contributes to the in vivo trimethylation of Lys residues in HSPA1 and HSPA8. In vitro methylates 'Lys-561' in HSPA1, 'Lys-564' in HSPA2, 'Lys-585' in HSPA5, 'Lys-563' in HSPA6 and 'Lys-561' in HSPA8. This Bos taurus (Bovine) protein is Protein N-lysine methyltransferase METTL21A (METTL21A).